The chain runs to 127 residues: Small ribosomal subunit protein bS6 (127 aa).

The tract at residues 101-127 (PMMKEEKARDLLQGAKADAPAEQPAAA) is disordered. Positions 115-127 (AKADAPAEQPAAA) are enriched in low complexity.

This sequence belongs to the bacterial ribosomal protein bS6 family.

Its function is as follows. Binds together with bS18 to 16S ribosomal RNA. This Thiobacillus denitrificans (strain ATCC 25259 / T1) protein is Small ribosomal subunit protein bS6.